Reading from the N-terminus, the 331-residue chain is Gamma-parvin (331 aa).

Met-1 is subject to N-acetylmethionine. The segment at 18–38 (QPTEEELPRGGKKKYLSPNSK) is disordered. Calponin-homology (CH) domains follow at residues 44–151 (EELQ…KRFQ) and 210–317 (HAVQ…QKHS).

The protein belongs to the parvin family. Interacts with ILK; the interaction promotes the establishment of cell polarity required for leukocyte migration. Interacts with ARHGEF6; the guanine nucleotide exchange factor activity of ARHGEF6 is essential for the PARVG-induced enhancement of cell spreading. As to expression, expressed strongly in spleen and testis, moderately in lung and weakly in brain and heart.

The protein localises to the cell junction. Its subcellular location is the focal adhesion. It localises to the cell membrane. It is found in the cytoplasm. The protein resides in the cytoskeleton. In terms of biological role, plays a role with ILK in promoting the cell adhesion and spreading of leukocytes. This chain is Gamma-parvin (Parvg), found in Mus musculus (Mouse).